The chain runs to 260 residues: Enoyl-[acyl-carrier-protein] reductase [NADH] FabI (260 aa).

NAD(+) contacts are provided by residues Gly-15, 21–22 (SI), Gln-42, 66–67 (DV), and Met-94. A substrate-binding site is contributed by Ala-97. Residues Tyr-147 and Tyr-157 each act as proton acceptor in the active site. Residues Lys-164 and 193–197 (IKTLA) each bind NAD(+).

This sequence belongs to the short-chain dehydrogenases/reductases (SDR) family. FabI subfamily. In terms of assembly, homotetramer.

The catalysed reaction is a 2,3-saturated acyl-[ACP] + NAD(+) = a (2E)-enoyl-[ACP] + NADH + H(+). It participates in lipid metabolism; fatty acid biosynthesis. In terms of biological role, catalyzes the reduction of a carbon-carbon double bond in an enoyl moiety that is covalently linked to an acyl carrier protein (ACP). Involved in the elongation cycle of fatty acid which are used in the lipid metabolism. This Rickettsia conorii (strain ATCC VR-613 / Malish 7) protein is Enoyl-[acyl-carrier-protein] reductase [NADH] FabI (fabI).